The sequence spans 451 residues: MNTIFKQKNTHPFSNAANRLDRLPISRVHFQVLTALGIVYFFDLADLFTLSNVAPALIEHWGIPLSTIANVTAASFLGMFLGASLGGRLSDRIGRKKALNLFVFVFSIASLCNAAAWDIPSLMTFRFLTGFGVAAAMVITNSYLAEFFPSSVRGKYISFCAMIGLIGVPITNIVSAFVIPLGSWGWRLVFVWGAVGLIYFFFIHRLEESPRWHENRGEYAKADAILTRIEEQVEKEKGPLPAASQPKVSETVKQNAGYAGLLKGRNLKITIVLSAVWIFETFGFYGFASWVPSLLKSNGVTMENTLWYNVLHSVGAPLGALLGSMISERFQRKWILAASAFLTAIAGLLYGMTFIPIMIIVFGFIVNITERVFTSNLYAYTSEPYPTEYRSSGSGLAYGLGRFSNIFGSLLVGFIAVQLGYISVFLFIGGCWLACSLLLIFFGPNTNAKQI.

The Cytoplasmic portion of the chain corresponds to 1-29 (MNTIFKQKNTHPFSNAANRLDRLPISRVH). The helical transmembrane segment at 30-50 (FQVLTALGIVYFFDLADLFTL) threads the bilayer. Topologically, residues 51–60 (SNVAPALIEH) are extracellular. Residues 61–81 (WGIPLSTIANVTAASFLGMFL) form a helical membrane-spanning segment. The Cytoplasmic portion of the chain corresponds to 82–97 (GASLGGRLSDRIGRKK). A helical transmembrane segment spans residues 98–118 (ALNLFVFVFSIASLCNAAAWD). Residues 119-124 (IPSLMT) are Extracellular-facing. Residues 125-145 (FRFLTGFGVAAAMVITNSYLA) form a helical membrane-spanning segment. The Cytoplasmic segment spans residues 146 to 157 (EFFPSSVRGKYI). The chain crosses the membrane as a helical span at residues 158–178 (SFCAMIGLIGVPITNIVSAFV). The Extracellular segment spans residues 179 to 182 (IPLG). The helical transmembrane segment at 183–203 (SWGWRLVFVWGAVGLIYFFFI) threads the bilayer. Over 204–270 (HRLEESPRWH…LLKGRNLKIT (67 aa)) the chain is Cytoplasmic. The helical transmembrane segment at 271–291 (IVLSAVWIFETFGFYGFASWV) threads the bilayer. Over 292-305 (PSLLKSNGVTMENT) the chain is Extracellular. The helical transmembrane segment at 306-326 (LWYNVLHSVGAPLGALLGSMI) threads the bilayer. Topologically, residues 327–333 (SERFQRK) are cytoplasmic. A helical membrane pass occupies residues 334-354 (WILAASAFLTAIAGLLYGMTF). The Extracellular portion of the chain corresponds to 355-357 (IPI). The helical transmembrane segment at 358–378 (MIIVFGFIVNITERVFTSNLY) threads the bilayer. Residues 379-396 (AYTSEPYPTEYRSSGSGL) lie on the Cytoplasmic side of the membrane. A helical transmembrane segment spans residues 397-417 (AYGLGRFSNIFGSLLVGFIAV). The Extracellular segment spans residues 418 to 421 (QLGY). Residues 422–442 (ISVFLFIGGCWLACSLLLIFF) traverse the membrane as a helical segment. Topologically, residues 443 to 451 (GPNTNAKQI) are cytoplasmic.

Belongs to the major facilitator superfamily. Sugar transporter (TC 2.A.1.1) family.

The protein localises to the cell membrane. This chain is Putative metabolite transport protein YyaJ (yyaJ), found in Bacillus subtilis (strain 168).